The chain runs to 479 residues: UDP-N-acetylmuramate--L-alanine ligase (479 aa).

126–132 (GTHGKTT) contributes to the ATP binding site.

This sequence belongs to the MurCDEF family.

The protein resides in the cytoplasm. The enzyme catalyses UDP-N-acetyl-alpha-D-muramate + L-alanine + ATP = UDP-N-acetyl-alpha-D-muramoyl-L-alanine + ADP + phosphate + H(+). The protein operates within cell wall biogenesis; peptidoglycan biosynthesis. In terms of biological role, cell wall formation. The polypeptide is UDP-N-acetylmuramate--L-alanine ligase (Alkalilimnicola ehrlichii (strain ATCC BAA-1101 / DSM 17681 / MLHE-1)).